The following is a 248-amino-acid chain: ATP synthase subunit a, chloroplastic (248 aa).

A run of 5 helical transmembrane segments spans residues 37–57, 96–116, 135–155, 200–220, and 221–241; these read AQVLITSWVVIAILLGLSIVA, VPFIGTMFLFIFVSNWSGALF, INTTVALALLTSVAYFYAGLH, LVVAVLISLVPLVVPIPMMFL, and GLFTSAIQALIFATLAAAYIG.

The protein belongs to the ATPase A chain family. In terms of assembly, F-type ATPases have 2 components, CF(1) - the catalytic core - and CF(0) - the membrane proton channel. CF(1) has five subunits: alpha(3), beta(3), gamma(1), delta(1), epsilon(1). CF(0) has four main subunits: a, b, b' and c.

The protein localises to the plastid. It localises to the chloroplast thylakoid membrane. Its function is as follows. Key component of the proton channel; it plays a direct role in the translocation of protons across the membrane. This is ATP synthase subunit a, chloroplastic from Angiopteris evecta (Mule's foot fern).